A 77-amino-acid polypeptide reads, in one-letter code: Putative antitoxin VapB3 (77 aa).

A coiled-coil region spans residues 10 to 60 (RRGLKKELEELGINYAEAVRKFLEELVARERRRRALERARALREELRKKGA).

Forms a complex with putative toxin VapC3, possibly VapB(2)-VapC(2).

Its function is as follows. Antitoxin component of a type II toxin-antitoxin (TA) system. The sequence is that of Putative antitoxin VapB3 (vAPb3) from Pyrobaculum aerophilum (strain ATCC 51768 / DSM 7523 / JCM 9630 / CIP 104966 / NBRC 100827 / IM2).